A 427-amino-acid polypeptide reads, in one-letter code: UPF0415 protein C7orf25 homolog (427 aa).

The segment covering G200 to T234 has biased composition (acidic residues). The disordered stretch occupies residues G200–L236.

It belongs to the UPF0415 family.

This is UPF0415 protein C7orf25 homolog from Danio rerio (Zebrafish).